Here is a 144-residue protein sequence, read N- to C-terminus: MNFKYIIAVSFFIASAYARTEEKDVQSLSQRDVLEEESLREIRGIGGVLLSAGKAALKGLAKVLAEKYANGKRTAEDHEVMKRLEAVMRDLDSLDHPEEASERQTRGFNQEEIANLFTKKEKRILGPVLGLVGNALGGLIKKIG.

The N-terminal stretch at 1 to 18 (MNFKYIIAVSFFIASAYA) is a signal peptide. The propeptide occupies 19 to 43 (RTEEKDVQSLSQRDVLEEESLREIR). An Asparagine amide modification is found at Asn70. Positions 74–123 (TAEDHEVMKRLEAVMRDLDSLDHPEEASERQTRGFNQEEIANLFTKKEKR) are excised as a propeptide. Ile143 is subject to Isoleucine amide.

Belongs to the bombinin family. Expressed by the skin glands.

It localises to the secreted. Functionally, maximin-4 shows antibacterial activity against both Gram-positive and Gram-negative bacteria. It also shows antimicrobial activity against the fungus C.albicans, but not against A.flavus nor P.uticale. It has little hemolytic activity. It does not possess a significant cytotoxicity against tumor cell lines. It does not possess a significant anti-HIV activity. In terms of biological role, maximin-H3 shows antibacterial activity against both Gram-positive and Gram-negative bacteria. It also shows antimicrobial activity against the fungus C.albicans. Shows strong hemolytic activity. In Bombina maxima (Giant fire-bellied toad), this protein is Maximins 4/H3 type 3.